A 293-amino-acid polypeptide reads, in one-letter code: Fructokinase (293 aa).

T133 contacts ATP. Positions 156, 174, 177, and 180 each coordinate Zn(2+). ATP contacts are provided by residues P188 and 236 to 240; that span reads GVMAQ.

The protein belongs to the ROK (NagC/XylR) family. It depends on Mg(2+) as a cofactor.

It catalyses the reaction D-fructose + ATP = D-fructose 6-phosphate + ADP + H(+). Inhibition by zinc ions. In Streptococcus mutans serotype c (strain ATCC 700610 / UA159), this protein is Fructokinase (scrK).